The sequence spans 154 residues: Ribosomal RNA large subunit methyltransferase H (154 aa).

S-adenosyl-L-methionine contacts are provided by residues L70, G102, and 121 to 126; that span reads LSRMTL.

The protein belongs to the RNA methyltransferase RlmH family. Homodimer.

The protein resides in the cytoplasm. It catalyses the reaction pseudouridine(1915) in 23S rRNA + S-adenosyl-L-methionine = N(3)-methylpseudouridine(1915) in 23S rRNA + S-adenosyl-L-homocysteine + H(+). Its function is as follows. Specifically methylates the pseudouridine at position 1915 (m3Psi1915) in 23S rRNA. This Citrifermentans bemidjiense (strain ATCC BAA-1014 / DSM 16622 / JCM 12645 / Bem) (Geobacter bemidjiensis) protein is Ribosomal RNA large subunit methyltransferase H.